We begin with the raw amino-acid sequence, 89 residues long: RNA-binding protein Hfq (89 aa).

Positions 9-68 (DPFLNALRRERVPVSIYLVNGIKLQGQVESFDQFVILLKNTVSQMVYKHAISTVVPARAL) constitute a Sm domain.

The protein belongs to the Hfq family. As to quaternary structure, homohexamer.

Functionally, RNA chaperone that binds small regulatory RNA (sRNAs) and mRNAs to facilitate mRNA translational regulation in response to envelope stress, environmental stress and changes in metabolite concentrations. Also binds with high specificity to tRNAs. In Shewanella denitrificans (strain OS217 / ATCC BAA-1090 / DSM 15013), this protein is RNA-binding protein Hfq.